The chain runs to 699 residues: Protein STRUBBELIG-RECEPTOR FAMILY 5 (699 aa).

The signal sequence occupies residues 1–22 (MTQKLVRLVIVSLAITVTLLQA). At 23–273 (KTDNQEVSAL…DGGGITAGTG (251 aa)) the chain is on the extracellular side. LRR repeat units lie at residues 93-115 (SLTT…LPPN), 116-136 (IANL…SLSQ), 139-161 (NLQS…FQKL), 163-186 (KLET…ANLT), and 187-209 (SLKK…RNLA). Asparagine 184 is a glycosylation site (N-linked (GlcNAc...) asparagine). Residues 239–263 (NDWSTETAPPPPPGVKYGRKSSGSK) are disordered. A helical membrane pass occupies residues 274–294 (MVIAGACLGVLVLIIVLIALV). At 295-699 (SKKKSSLSPH…SYRAHDDYDY (405 aa)) the chain is on the cytoplasmic side. Phosphoserine is present on serine 368. The Protein kinase domain maps to 404-675 (FSPGNLLGEG…SEVVEALVRM (272 aa)). Residues 410-418 (LGEGSIGRV) and lysine 432 contribute to the ATP site.

The protein belongs to the protein kinase superfamily. Ser/Thr protein kinase family. As to expression, expressed in leaves and flowers.

It localises to the membrane. The polypeptide is Protein STRUBBELIG-RECEPTOR FAMILY 5 (SRF5) (Arabidopsis thaliana (Mouse-ear cress)).